The primary structure comprises 423 residues: UPF0229 protein PSEEN0423 (423 aa).

The tract at residues 85-107 (GEHIARPQGGGGGGGRGKAGNSG) is disordered. Gly residues predominate over residues 92–107 (QGGGGGGGRGKAGNSG).

It belongs to the UPF0229 family.

This chain is UPF0229 protein PSEEN0423, found in Pseudomonas entomophila (strain L48).